The following is a 193-amino-acid chain: ATP-dependent Clp protease proteolytic subunit 1 (193 aa).

S99 acts as the Nucleophile in catalysis. Residue H124 is part of the active site.

It belongs to the peptidase S14 family. In terms of assembly, fourteen ClpP subunits assemble into 2 heptameric rings which stack back to back to give a disk-like structure with a central cavity, resembling the structure of eukaryotic proteasomes.

The protein localises to the cytoplasm. It carries out the reaction Hydrolysis of proteins to small peptides in the presence of ATP and magnesium. alpha-casein is the usual test substrate. In the absence of ATP, only oligopeptides shorter than five residues are hydrolyzed (such as succinyl-Leu-Tyr-|-NHMec, and Leu-Tyr-Leu-|-Tyr-Trp, in which cleavage of the -Tyr-|-Leu- and -Tyr-|-Trp bonds also occurs).. In terms of biological role, cleaves peptides in various proteins in a process that requires ATP hydrolysis. Has a chymotrypsin-like activity. Plays a major role in the degradation of misfolded proteins. The chain is ATP-dependent Clp protease proteolytic subunit 1 from Shouchella clausii (strain KSM-K16) (Alkalihalobacillus clausii).